Here is a 1039-residue protein sequence, read N- to C-terminus: Serine/threonine-protein kinase Tao (1039 aa).

The Protein kinase domain maps to 27-280 (FEDLREIGHG…SAKLLTHAYV (254 aa)). ATP-binding positions include 33 to 41 (IGHGSFGAV) and K56. D150 acts as the Proton acceptor in catalysis. Disordered stretches follow at residues 324–457 (SAVG…NSAS), 485–508 (GGGGTGTGGSGGGSPASGGPLADR), 629–648 (HQQDVERRAKQTSAAEKKLH), and 677–707 (WKRELSMDESTPKRQRDLTLQSQKDNLKQHE). Positions 341–350 (SSKSNSITSE) are enriched in polar residues. Positions 359–376 (SAASSQSSSSNSIPAAAQ) are enriched in low complexity. Residues 377 to 387 (NHHHIAAHHHQ) are compositionally biased toward basic residues. Low complexity-rich tracts occupy residues 388–397 (QAASAAVAAA) and 413–429 (PSGQQGQPVPPGAVSRN). A compositionally biased stretch (polar residues) spans 444-454 (HSMNNNVTPTN). The segment covering 485-500 (GGGGTGTGGSGGGSPA) has biased composition (gly residues). Coiled-coil stretches lie at residues 631–765 (QDVE…MLLK) and 835–993 (KQFR…DNES). Residues 677 to 693 (WKRELSMDESTPKRQRD) are compositionally biased toward basic and acidic residues.

It belongs to the protein kinase superfamily. STE Ser/Thr protein kinase family. STE20 subfamily. In terms of assembly, interacts with Schip1; the interaction enhances Tao kinase activity. Mg(2+) serves as cofactor. Autophosphorylated. In terms of tissue distribution, in the posterior midgut, expressed in almost all intestinal cell types including intestinal stem cells and enterocytes (at protein level). Maternally expressed, ubiquitously distributed in the egg and early embryo and enriched in the germ plasm at the posterior pole of the early embryo including the pole cells.

It is found in the cytoplasm. It localises to the cytoskeleton. Its subcellular location is the spindle. The protein localises to the membrane. The protein resides in the perikaryon. It is found in the cell cortex. It localises to the cell projection. Its subcellular location is the axon. It carries out the reaction L-seryl-[protein] + ATP = O-phospho-L-seryl-[protein] + ADP + H(+). The catalysed reaction is L-threonyl-[protein] + ATP = O-phospho-L-threonyl-[protein] + ADP + H(+). Serine/threonine-protein kinase which regulates the Hippo/SWH (Sav/Wts/Hpo) signaling pathway, a signaling pathway that plays a pivotal role in organ size control and tumor suppression by restricting proliferation and promoting apoptosis. The core of this pathway is composed of a kinase cascade wherein Hippo (hpo), in complex with its regulatory protein Salvador (sav), phosphorylates and activates Warts (wts) in complex with its regulatory protein Mats, which in turn phosphorylates and inactivates the Yorkie (yki) oncoprotein. In imaginal cells, phosphorylates and activates hpo and leads to repression of yki. In the midgut, negatively regulates the proliferation of intestinal stem cells through the Hippo/SWH pathway. Independent of the hippo/SWH pathway, regulates epithelial morphogenesis in follicle cells by promoting the endocytosis of Fas2 and reducing lateral adhesion between epithelial cells which, in turn, permits shrinking of the lateral membrane and initiates morphogenesis of the squamous epithelium. Required for the development of both the mushroom body and the ellipsoid body in the brain and may act as a negative regulator of the par-1 kinase. Negatively regulates the JNK pathway which increases sensitivity to ethanol exposure. Plays a role in the control of cell shape by negatively regulating the growth of microtubule plus-ends as they contact the actin-rich cell cortex. Required for the induction of apoptosis in pole cells by promoting expression of skl which enhances activity of the apoptosis activator hid. Functionally, induces in vitro expression of large, highly dynamic, microtubule-dependent lamellopodia-like cytoplasmic expansions which constantly probe the environment. In terms of biological role, induces in vitro expression of actin-dependent filopodia-like cytoplasmic protrusions which firmly attach to the substrate. Antagonizes the activity of isoform D. The sequence is that of Serine/threonine-protein kinase Tao from Drosophila melanogaster (Fruit fly).